The primary structure comprises 517 residues: GMP synthase [glutamine-hydrolyzing] (517 aa).

The 192-residue stretch at Lys11–Asn202 folds into the Glutamine amidotransferase type-1 domain. Cys88 functions as the Nucleophile in the catalytic mechanism. Catalysis depends on residues His176 and Glu178. The region spanning Trp203–Arg392 is the GMPS ATP-PPase domain. Residue Ser230–Ser236 participates in ATP binding.

In terms of assembly, homodimer.

The catalysed reaction is XMP + L-glutamine + ATP + H2O = GMP + L-glutamate + AMP + diphosphate + 2 H(+). Its pathway is purine metabolism; GMP biosynthesis; GMP from XMP (L-Gln route): step 1/1. In terms of biological role, catalyzes the synthesis of GMP from XMP. The polypeptide is GMP synthase [glutamine-hydrolyzing] (Lactobacillus gasseri (strain ATCC 33323 / DSM 20243 / BCRC 14619 / CIP 102991 / JCM 1131 / KCTC 3163 / NCIMB 11718 / NCTC 13722 / AM63)).